Here is a 136-residue protein sequence, read N- to C-terminus: Nucleoside diphosphate kinase (136 aa).

ATP-binding residues include lysine 10, phenylalanine 58, arginine 86, threonine 92, arginine 104, and asparagine 114. Histidine 117 (pros-phosphohistidine intermediate) is an active-site residue.

The protein belongs to the NDK family. Homotetramer. Mg(2+) is required as a cofactor.

The protein localises to the cytoplasm. It catalyses the reaction a 2'-deoxyribonucleoside 5'-diphosphate + ATP = a 2'-deoxyribonucleoside 5'-triphosphate + ADP. The enzyme catalyses a ribonucleoside 5'-diphosphate + ATP = a ribonucleoside 5'-triphosphate + ADP. In terms of biological role, major role in the synthesis of nucleoside triphosphates other than ATP. The ATP gamma phosphate is transferred to the NDP beta phosphate via a ping-pong mechanism, using a phosphorylated active-site intermediate. The chain is Nucleoside diphosphate kinase from Mycobacterium marinum (strain ATCC BAA-535 / M).